Consider the following 164-residue polypeptide: 5-formyltetrahydrofolate cyclo-ligase (164 aa).

3–7 (KNALR) lines the ATP pocket. Glu50 and Glu55 together coordinate substrate. 115–123 (RLGFGKGYY) contacts ATP. Asp124 provides a ligand contact to Mg(2+). ATP-binding residues include Arg125 and Trp153. A Mg(2+)-binding site is contributed by Asp154.

It belongs to the 5-formyltetrahydrofolate cyclo-ligase family. Monomer or homodimer. It depends on Mg(2+) as a cofactor. Requires Mn(2+) as cofactor. Ca(2+) serves as cofactor. The cofactor is Zn(2+). Fe(2+) is required as a cofactor. It depends on Co(2+) as a cofactor. Requires Cu(2+) as cofactor.

The protein resides in the cytoplasm. It carries out the reaction (6S)-5-formyl-5,6,7,8-tetrahydrofolate + ATP = (6R)-5,10-methenyltetrahydrofolate + ADP + phosphate. Its function is as follows. Involved in folate metabolism. Catalyzes the irreversible conversion of 5-formyltetrahydrofolate (5-FTHF) to yield 5,10-methenyltetrahydrofolate. The sequence is that of 5-formyltetrahydrofolate cyclo-ligase from Mycoplasma pneumoniae (strain ATCC 29342 / M129 / Subtype 1) (Mycoplasmoides pneumoniae).